The chain runs to 444 residues: Orexin receptor type 2 (444 aa).

Positions 1-10 (MSGTKLEDSP) are enriched in basic and acidic residues. Residues 1-30 (MSGTKLEDSPPCRNWSSAPELNETQEPFLN) are disordered. The Extracellular portion of the chain corresponds to 1 to 54 (MSGTKLEDSPPCRNWSSAPELNETQEPFLNPTDYDDEEFLRYLWREYLHPKEYE). 2 N-linked (GlcNAc...) asparagine glycosylation sites follow: Asn14 and Asn22. Residues 14 to 27 (NWSSAPELNETQEP) show a composition bias toward polar residues. Positions 33–49 (DYDDEEFLRYLWREYLH) are required for response to orexin-A. The chain crosses the membrane as a helical span at residues 55–75 (WVLIAGYIIVFVVALVGNVLV). The Cytoplasmic segment spans residues 76–88 (CVAVWKNHHMRTV). Residues 89-110 (TNYFIVNLSLADVLVTITCLPA) traverse the membrane as a helical segment. Over 111 to 127 (TLVVDITETWFFGQSLC) the chain is Extracellular. A disulfide bridge connects residues Cys127 and Cys210. Residues 128-150 (KVIPYLQTVSVSVSVLTLSCIAL) form a helical membrane-spanning segment. At 151 to 170 (DRWYAICHPLMFKSTAKRAR) the chain is on the cytoplasmic side. A helical transmembrane segment spans residues 171–191 (NSIVIIWIVSCIIMIPQAIVM). Topologically, residues 192-222 (ECSTMLPGLANKTTLFTVCDERWGGEIYPKM) are extracellular. The N-linked (GlcNAc...) asparagine glycan is linked to Asn202. A helical membrane pass occupies residues 223–243 (YHICFFLVTYMAPLCLMVLAY). Topologically, residues 244–304 (LQIFRKLWCR…QIRARRKTAR (61 aa)) are cytoplasmic. A helical transmembrane segment spans residues 305–326 (MLMVVLLVFAICYLPISILNVL). The Extracellular portion of the chain corresponds to 327 to 342 (KRVFGMFTHTEDRETV). A helical transmembrane segment spans residues 343–366 (YAWFTFSHWLVYANSAANPIIYNF). The Cytoplasmic segment spans residues 367–444 (LSGKFREEFK…ANGAGPLQNW (78 aa)).

The protein belongs to the G-protein coupled receptor 1 family.

The protein resides in the cell membrane. Its function is as follows. Nonselective, high-affinity receptor for both orexin-A and orexin-B neuropeptides. Triggers an increase in cytoplasmic Ca(2+) levels in response to orexin-A binding. This is Orexin receptor type 2 (HCRTR2) from Canis lupus familiaris (Dog).